A 233-amino-acid chain; its full sequence is tRNA (guanine-N(7)-)-methyltransferase (233 aa).

Residues 1–21 (MTEESHPLRGAGNFFGRRHGK) form a disordered region. S-adenosyl-L-methionine contacts are provided by glutamate 64, glutamate 89, aspartate 116, and aspartate 138. The active site involves aspartate 138. Substrate is bound by residues lysine 142, aspartate 174, and 212 to 215 (TRYE).

Belongs to the class I-like SAM-binding methyltransferase superfamily. TrmB family.

It carries out the reaction guanosine(46) in tRNA + S-adenosyl-L-methionine = N(7)-methylguanosine(46) in tRNA + S-adenosyl-L-homocysteine. Its pathway is tRNA modification; N(7)-methylguanine-tRNA biosynthesis. Catalyzes the formation of N(7)-methylguanine at position 46 (m7G46) in tRNA. This Brucella anthropi (strain ATCC 49188 / DSM 6882 / CCUG 24695 / JCM 21032 / LMG 3331 / NBRC 15819 / NCTC 12168 / Alc 37) (Ochrobactrum anthropi) protein is tRNA (guanine-N(7)-)-methyltransferase.